An 89-amino-acid chain; its full sequence is Small ribosomal subunit protein uS14 (89 aa).

Cys52, Cys55, Cys68, and Cys71 together coordinate Zn(2+).

This sequence belongs to the universal ribosomal protein uS14 family. Part of the 30S ribosomal subunit. Contacts proteins S3 and S10. Requires Zn(2+) as cofactor.

Functionally, binds 16S rRNA, required for the assembly of 30S particles and may also be responsible for determining the conformation of the 16S rRNA at the A site. The sequence is that of Small ribosomal subunit protein uS14 (rpsN) from Salinibacter ruber (strain DSM 13855 / M31).